We begin with the raw amino-acid sequence, 246 residues long: Probable phosphatase AHA_1344 (246 aa).

Positions 8, 10, 16, 41, 74, 102, 132, 193, and 195 each coordinate Zn(2+).

It belongs to the PHP family. It depends on Zn(2+) as a cofactor.

The protein is Probable phosphatase AHA_1344 of Aeromonas hydrophila subsp. hydrophila (strain ATCC 7966 / DSM 30187 / BCRC 13018 / CCUG 14551 / JCM 1027 / KCTC 2358 / NCIMB 9240 / NCTC 8049).